The primary structure comprises 269 residues: Phycobilisome 37.5 kDa linker polypeptide, phycocyanin-associated, rod (269 aa).

Residues 2–177 form the PBS-linker domain; sequence TSSTAARQLG…IYRGYANSDR (176 aa). The region spanning 217 to 269 is the CpcD-like domain; the sequence is GQLYRVRVIQADRGRTTQIRRSIQEYLVSYDQLSPTLQRLNQRGSRVVNISPA.

Belongs to the phycobilisome linker protein family.

It is found in the cellular thylakoid membrane. Rod linker protein, associated with phycocyanin. Linker polypeptides determine the state of aggregation and the location of the disk-shaped phycobiliprotein units within the phycobilisome and modulate their spectroscopic properties in order to mediate a directed and optimal energy transfer. This Microchaete diplosiphon (Fremyella diplosiphon) protein is Phycobilisome 37.5 kDa linker polypeptide, phycocyanin-associated, rod (cpcH2).